The following is a 146-amino-acid chain: Nucleoside diphosphate kinase (146 aa).

ATP is bound by residues Lys-11, Phe-59, Arg-87, Thr-93, Arg-104, and Asn-114. The active-site Pros-phosphohistidine intermediate is His-117.

This sequence belongs to the NDK family. Homotetramer. The cofactor is Mg(2+).

The protein resides in the cytoplasm. It catalyses the reaction a 2'-deoxyribonucleoside 5'-diphosphate + ATP = a 2'-deoxyribonucleoside 5'-triphosphate + ADP. The catalysed reaction is a ribonucleoside 5'-diphosphate + ATP = a ribonucleoside 5'-triphosphate + ADP. Functionally, major role in the synthesis of nucleoside triphosphates other than ATP. The ATP gamma phosphate is transferred to the NDP beta phosphate via a ping-pong mechanism, using a phosphorylated active-site intermediate. This chain is Nucleoside diphosphate kinase, found in Anaplasma marginale (strain Florida).